A 261-amino-acid chain; its full sequence is MGITVMARIDNYEQRFGGIGRLYTPDSLARLRQAHICVIGIGGVGSWVVEALARSGIGELTLIDMDDICVTNINRQLPAMSGTIGKLKTEVMSERVKLINPECTVNIIDDFISPENQSDYLNRGYDYVIDAIDNVKTKASLIAYCKRNKINVITIGGAGGQTDPTQIQIADLSKTIQDPLLAKVRSVLRKDYNFSQNPKRKFSIDAVFSTQPLIFPQMTEGCSTSATMNCANGFGAATMITATFGFFAVSRVIDKLLKKKS.

A helical membrane pass occupies residues 230-250 (CANGFGAATMITATFGFFAVS).

The protein belongs to the HesA/MoeB/ThiF family.

The protein localises to the membrane. In terms of biological role, catalyzes the ATP-dependent dehydration of threonylcarbamoyladenosine at position 37 (t(6)A37) to form cyclic t(6)A37 (ct(6)A37) in tRNAs that read codons beginning with adenine. This chain is tRNA threonylcarbamoyladenosine dehydratase (tcdA), found in Haemophilus influenzae (strain ATCC 51907 / DSM 11121 / KW20 / Rd).